A 464-amino-acid polypeptide reads, in one-letter code: Bifunctional NAD(P)H-hydrate repair enzyme Nnr (464 aa).

An NAD(P)H-hydrate epimerase region spans residues 1-205 (MEFISSRDMQ…PESFENLCGP (205 aa)). Residues 9–201 (MQILDTNCEY…DIGIPESFEN (193 aa)) enclose the YjeF N-terminal domain. An NADPHX 1; for epimerase activity region spans residues 55-59 (NNGGD). 2 residues coordinate K(+): asparagine 56 and aspartate 114. Residues 118 to 124 (GTGVRGR) form an NADPHX 1; for epimerase activity region. (6S)-NADPHX contacts are provided by tyrosine 129 and aspartate 147. Residue threonine 150 participates in K(+) binding. The region spanning 203–461 (CGPGDVAFSY…KAIPEAILRC (259 aa)) is the YjeF C-terminal domain. Residues 205-464 (PGDVAFSYKR…PEAILRCKSF (260 aa)) form an ADP-dependent (S)-NAD(P)H-hydrate dehydratase region. Glycine 305 is a binding site for (6S)-NADPHX. Residues 348-354 (HRGEFGR) form an NADPHX 2; for dehydratase activity region. ADP-binding positions include 375–379 (KGRED) and 394–403 (NAGMTVGGTG). Aspartate 404 is a binding site for (6S)-NADPHX.

The protein in the N-terminal section; belongs to the NnrE/AIBP family. It in the C-terminal section; belongs to the NnrD/CARKD family. K(+) serves as cofactor.

The catalysed reaction is (6S)-NADHX + ADP = AMP + phosphate + NADH + H(+). It carries out the reaction (6S)-NADPHX + ADP = AMP + phosphate + NADPH + H(+). The enzyme catalyses (6R)-NADHX = (6S)-NADHX. It catalyses the reaction (6R)-NADPHX = (6S)-NADPHX. Bifunctional enzyme that catalyzes the epimerization of the S- and R-forms of NAD(P)HX and the dehydration of the S-form of NAD(P)HX at the expense of ADP, which is converted to AMP. This allows the repair of both epimers of NAD(P)HX, a damaged form of NAD(P)H that is a result of enzymatic or heat-dependent hydration. The protein is Bifunctional NAD(P)H-hydrate repair enzyme Nnr (nnr) of Archaeoglobus fulgidus (strain ATCC 49558 / DSM 4304 / JCM 9628 / NBRC 100126 / VC-16).